Here is a 268-residue protein sequence, read N- to C-terminus: Putative hydro-lyase ABAYE2440 (268 aa).

Belongs to the D-glutamate cyclase family.

This is Putative hydro-lyase ABAYE2440 from Acinetobacter baumannii (strain AYE).